The primary structure comprises 522 residues: MEELQGYFEKDRSRQQPFLYPLLFQEYIYALAHDRGLNRNGSIFYEPLEVFGYDSKSSLALVKRLITRIYQQHFFLSSVNDSNQNRFVGHHHTNFFYSRFYSQMISEGFAIIVEIPFSLQLVSPLKEKEIPKSHNLRSIHFNFPFLEDQLLHFNYVSDILIPHPIHMEILVQILQCWIQDVPLLHFLRFFLHEYHNWHSFFITQNKSIYLFSKETKRLFRFLYNSYVSECEFVFVFLRKHSSYLRFTSFRTFLERRYFYGKMEHLQTEHLIIVCCDYFNRTLWSFKDPFMHYARCQGKAILVSKGTHLLMKKWKYNFVNLWQYYFHFWYQSYRIHINQLSNHSFYFLGYLSSLLKNSSTVRNQMLDNSFLIDTLTTKFDTAVPVIFLIVSLSKAQFCTVSGHPISKPIWTDLSDSGIIERFGRICRNLSHYHSGSSKKQGLYRIKYILRLSCARTLARKHKSTVRTFMQRLGSRLLEEFFTEGEQDLSLILPKAIPFPFSGSHRERIWYLDIIRINDLVNRS.

The protein belongs to the intron maturase 2 family. MatK subfamily.

It localises to the plastid. It is found in the chloroplast. In terms of biological role, usually encoded in the trnK tRNA gene intron. Probably assists in splicing its own and other chloroplast group II introns. The protein is Maturase K of Schizorhiza neglecta (Lapeirousia neglecta).